Consider the following 67-residue polypeptide: Small ribosomal subunit protein eS17 (67 aa).

This sequence belongs to the eukaryotic ribosomal protein eS17 family.

The chain is Small ribosomal subunit protein eS17 from Haloquadratum walsbyi (strain DSM 16790 / HBSQ001).